We begin with the raw amino-acid sequence, 276 residues long: NH(3)-dependent NAD(+) synthetase (276 aa).

43–50 is an ATP binding site; that stretch reads GISGGVDS. Asp49 lines the Mg(2+) pocket. Deamido-NAD(+) is bound at residue Arg146. Thr166 lines the ATP pocket. Glu171 serves as a coordination point for Mg(2+). Deamido-NAD(+)-binding residues include Lys179 and Asp186. Residues Lys195 and Thr217 each contribute to the ATP site. Deamido-NAD(+) is bound at residue 266–267; that stretch reads HK.

This sequence belongs to the NAD synthetase family. In terms of assembly, homodimer.

It catalyses the reaction deamido-NAD(+) + NH4(+) + ATP = AMP + diphosphate + NAD(+) + H(+). It functions in the pathway cofactor biosynthesis; NAD(+) biosynthesis; NAD(+) from deamido-NAD(+) (ammonia route): step 1/1. Its function is as follows. Catalyzes the ATP-dependent amidation of deamido-NAD to form NAD. Uses ammonia as a nitrogen source. In Aliivibrio fischeri (strain MJ11) (Vibrio fischeri), this protein is NH(3)-dependent NAD(+) synthetase.